Reading from the N-terminus, the 360-residue chain is COP9 signalosome complex subunit 5 (360 aa).

Residues 60-197 (AKISALALLK…IGAFRTYPKD (138 aa)) enclose the MPN domain. Zn(2+) contacts are provided by H143, H145, and D156. The JAMM motif motif lies at 143-156 (HSHPGYGCWLSGID). 2 disordered regions span residues 293–315 (LMPS…RDSS) and 341–360 (SNKA…MVEA). Over residues 341–350 (SNKASTSAPD) the composition is skewed to polar residues.

This sequence belongs to the peptidase M67A family. CSN5 subfamily. As to quaternary structure, component of the CSN complex, probably composed of CSN1, CSN2, CSN3, CSN4, CSN5, CSN6, CSN7 and CSN8. Interacts with MCM2.

Functionally, probable protease subunit of the COP9 signalosome complex (CSN), a complex involved in various cellular and developmental processes such as photomorphogenesis and response to hormones. The CSN complex is an essential regulator of the ubiquitin (Ubl) conjugation pathway by mediating the deneddylation of the cullin subunits of SCF-type E3 ligase complexes, leading to decrease the Ubl ligase activity of SCF. Involved in early response to iron deficiency. This Oryza sativa subsp. japonica (Rice) protein is COP9 signalosome complex subunit 5.